The chain runs to 227 residues: Phosphatidylserine decarboxylase proenzyme (227 aa).

Ser-184 (schiff-base intermediate with substrate; via pyruvic acid) is an active-site residue. Ser-184 carries the post-translational modification Pyruvic acid (Ser); by autocatalysis.

The protein belongs to the phosphatidylserine decarboxylase family. PSD-A subfamily. As to quaternary structure, heterodimer of a large membrane-associated beta subunit and a small pyruvoyl-containing alpha subunit. Pyruvate serves as cofactor. Is synthesized initially as an inactive proenzyme. Formation of the active enzyme involves a self-maturation process in which the active site pyruvoyl group is generated from an internal serine residue via an autocatalytic post-translational modification. Two non-identical subunits are generated from the proenzyme in this reaction, and the pyruvate is formed at the N-terminus of the alpha chain, which is derived from the carboxyl end of the proenzyme. The post-translation cleavage follows an unusual pathway, termed non-hydrolytic serinolysis, in which the side chain hydroxyl group of the serine supplies its oxygen atom to form the C-terminus of the beta chain, while the remainder of the serine residue undergoes an oxidative deamination to produce ammonia and the pyruvoyl prosthetic group on the alpha chain.

It is found in the cell membrane. The enzyme catalyses a 1,2-diacyl-sn-glycero-3-phospho-L-serine + H(+) = a 1,2-diacyl-sn-glycero-3-phosphoethanolamine + CO2. It participates in phospholipid metabolism; phosphatidylethanolamine biosynthesis; phosphatidylethanolamine from CDP-diacylglycerol: step 2/2. Catalyzes the formation of phosphatidylethanolamine (PtdEtn) from phosphatidylserine (PtdSer). The protein is Phosphatidylserine decarboxylase proenzyme of Ehrlichia ruminantium (strain Welgevonden).